The primary structure comprises 369 residues: Anhydro-N-acetylmuramic acid kinase (369 aa).

Residue 12-19 coordinates ATP; it reads GTSMDGVD.

It belongs to the anhydro-N-acetylmuramic acid kinase family.

It carries out the reaction 1,6-anhydro-N-acetyl-beta-muramate + ATP + H2O = N-acetyl-D-muramate 6-phosphate + ADP + H(+). Its pathway is amino-sugar metabolism; 1,6-anhydro-N-acetylmuramate degradation. The protein operates within cell wall biogenesis; peptidoglycan recycling. Catalyzes the specific phosphorylation of 1,6-anhydro-N-acetylmuramic acid (anhMurNAc) with the simultaneous cleavage of the 1,6-anhydro ring, generating MurNAc-6-P. Is required for the utilization of anhMurNAc either imported from the medium or derived from its own cell wall murein, and thus plays a role in cell wall recycling. The protein is Anhydro-N-acetylmuramic acid kinase of Shewanella woodyi (strain ATCC 51908 / MS32).